A 293-amino-acid polypeptide reads, in one-letter code: NAD-dependent protein deacetylase (293 aa).

A Deacetylase sirtuin-type domain is found at 5-282 (PAHDHHTLQD…LHAPPHLPRA (278 aa)). Residues 27 to 47 (GAGC…GGWK) and 105 to 108 (QNVD) each bind NAD(+). His123 serves as the catalytic Proton acceptor. Zn(2+) contacts are provided by Cys131, Cys134, Cys182, and Cys185. Residues 222–224 (GSS), 248–250 (NFG), and Cys266 contribute to the NAD(+) site.

The protein belongs to the sirtuin family. Class II subfamily. It depends on Zn(2+) as a cofactor.

It is found in the cytoplasm. The catalysed reaction is N(6)-acetyl-L-lysyl-[protein] + NAD(+) + H2O = 2''-O-acetyl-ADP-D-ribose + nicotinamide + L-lysyl-[protein]. Its function is as follows. NAD-dependent protein deacetylase which modulates the activities of several enzymes which are inactive in their acetylated form. This is NAD-dependent protein deacetylase from Xanthomonas axonopodis pv. citri (strain 306).